Reading from the N-terminus, the 351-residue chain is Transcription factor Atoh1 (351 aa).

Disordered stretches follow at residues 16-39 and 89-116; these read LGDH…PATL and EAAA…SKSP. Residues 26 to 36 show a composition bias toward pro residues; the sequence is HHVPPLTPQPP. In terms of domain architecture, bHLH spans 156-208; sequence QRRLAANARERRRMHGLNHAFDQLRNVIPSFNNDKKLSKYETLQMAQIYINAL. Disordered regions lie at residues 244 to 278 and 308 to 351; these read GAGA…GPAS and LSPS…DEAS. Residues 247-256 show a composition bias toward low complexity; that stretch reads ASAVAGAQPA. Residues 258–268 are compositionally biased toward pro residues; that stretch reads GGGPRPTPPGP. Residues 332-351 show a composition bias toward basic and acidic residues; the sequence is HRSDGEFSPHSHYSDSDEAS.

Efficient DNA binding requires dimerization with another bHLH protein. In terms of tissue distribution, developing nervous system, and in adult epithelial cells of the gastrointestinal tract.

It localises to the nucleus. Functionally, transcriptional regulator. Activates E box-dependent transcription in collaboration with TCF3/E47, but the activity is completely antagonized by the negative regulator of neurogenesis HES1. Plays a role in the differentiation of subsets of neural cells by activating E box-dependent transcription. In Mus musculus (Mouse), this protein is Transcription factor Atoh1.